A 196-amino-acid polypeptide reads, in one-letter code: Probable GTP-binding protein EngB (196 aa).

An EngB-type G domain is found at 22 to 195; it reads KLPEVALAGR…WNWIESITKV (174 aa). GTP-binding positions include 30–37, 57–61, 75–78, 142–145, and 174–176; these read GRSNVGKS, GKTQT, DVPG, TKID, and FSA. Residues Ser37 and Thr59 each contribute to the Mg(2+) site.

Belongs to the TRAFAC class TrmE-Era-EngA-EngB-Septin-like GTPase superfamily. EngB GTPase family. Mg(2+) serves as cofactor.

Its function is as follows. Necessary for normal cell division and for the maintenance of normal septation. The chain is Probable GTP-binding protein EngB from Ligilactobacillus salivarius (strain UCC118) (Lactobacillus salivarius).